A 302-amino-acid polypeptide reads, in one-letter code: MAAAAAETPEVLRECGCKGIRTCLICERQRGSDPPWELPPAKTYRFIYCSDTGWAVGTEESDFEGWAFPFPGVMLIEDFVTREEEAELVRLMDRDPWKLSQSGRRKQDYGPKVNFRKQKLKTEGFCGLPSFSREVVRRMGLYPGLEGFRPVEQCNLDYCPERGSAIDPHLDDAWLWGERLVSLNLLSPTVLSMCREAPGSLLLCSAPSAAPEALVDSVIAPSRSVLCQEVEVAIPLPARSLLVLTGAARHQWKHAIHRRHIEARRVCVTFRELSAEFGPGGRQQELGQELLRIALSFQGRPV.

Ala2 is subject to N-acetylalanine. Thr8 bears the Phosphothreonine mark. The Fe2OG dioxygenase domain occupies 150 to 274; it reads PVEQCNLDYC…RVCVTFRELS (125 aa). Fe cation contacts are provided by His169, Asp171, and His254. Arg265 contributes to the 2-oxoglutarate binding site.

This sequence belongs to the alkB family. Interacts with ZFHX3, MLLT3, MLLT1, HSF4, EP300, TES, EIF3C, MTMR6 and PSMA6. It depends on Fe(2+) as a cofactor. In terms of tissue distribution, widely expressed, with highest expression in pancreas, ovary and spleen.

It is found in the cytoplasm. The protein localises to the nucleus. The protein resides in the nucleolus. It localises to the midbody. The enzyme catalyses an N(6)-methyl-2'-deoxyadenosine in DNA + 2-oxoglutarate + O2 = a 2'-deoxyadenosine in DNA + formaldehyde + succinate + CO2. It carries out the reaction N(6)-methyl-L-lysyl-[protein] + 2-oxoglutarate + O2 = L-lysyl-[protein] + formaldehyde + succinate + CO2. In terms of biological role, dioxygenase that mediates demethylation of actin monomethylated at 'Lys-84' (K84me1), thereby acting as a regulator of actomyosin-processes. Demethylation of actin K84me1 is required for maintaining actomyosin dynamics supporting normal cleavage furrow ingression during cytokinesis and cell migration. In addition to proteins, also demethylates DNA: specifically demethylates DNA methylated on the 6th position of adenine (N(6)-methyladenosine) DNA, thereby regulating Polycomb silencing. The polypeptide is Alpha-ketoglutarate-dependent dioxygenase alkB homolog 4 (Homo sapiens (Human)).